The primary structure comprises 403 residues: 4-hydroxy-3-methylbut-2-enyl diphosphate reductase (403 aa).

C66 serves as a coordination point for [4Fe-4S] cluster. H96 contacts (2E)-4-hydroxy-3-methylbut-2-enyl diphosphate. H96 provides a ligand contact to dimethylallyl diphosphate. H96 lines the isopentenyl diphosphate pocket. Residue C157 participates in [4Fe-4S] cluster binding. H185 is a (2E)-4-hydroxy-3-methylbut-2-enyl diphosphate binding site. H185 is a binding site for dimethylallyl diphosphate. Isopentenyl diphosphate is bound at residue H185. E187 functions as the Proton donor in the catalytic mechanism. (2E)-4-hydroxy-3-methylbut-2-enyl diphosphate is bound at residue T250. A [4Fe-4S] cluster-binding site is contributed by C288. (2E)-4-hydroxy-3-methylbut-2-enyl diphosphate contacts are provided by S317, S318, N319, and S379. S317, S318, N319, and S379 together coordinate dimethylallyl diphosphate. Isopentenyl diphosphate is bound by residues S317, S318, N319, and S379.

Belongs to the IspH family. It depends on [4Fe-4S] cluster as a cofactor.

It carries out the reaction isopentenyl diphosphate + 2 oxidized [2Fe-2S]-[ferredoxin] + H2O = (2E)-4-hydroxy-3-methylbut-2-enyl diphosphate + 2 reduced [2Fe-2S]-[ferredoxin] + 2 H(+). The catalysed reaction is dimethylallyl diphosphate + 2 oxidized [2Fe-2S]-[ferredoxin] + H2O = (2E)-4-hydroxy-3-methylbut-2-enyl diphosphate + 2 reduced [2Fe-2S]-[ferredoxin] + 2 H(+). Its pathway is isoprenoid biosynthesis; dimethylallyl diphosphate biosynthesis; dimethylallyl diphosphate from (2E)-4-hydroxy-3-methylbutenyl diphosphate: step 1/1. It participates in isoprenoid biosynthesis; isopentenyl diphosphate biosynthesis via DXP pathway; isopentenyl diphosphate from 1-deoxy-D-xylulose 5-phosphate: step 6/6. In terms of biological role, catalyzes the conversion of 1-hydroxy-2-methyl-2-(E)-butenyl 4-diphosphate (HMBPP) into a mixture of isopentenyl diphosphate (IPP) and dimethylallyl diphosphate (DMAPP). Acts in the terminal step of the DOXP/MEP pathway for isoprenoid precursor biosynthesis. The chain is 4-hydroxy-3-methylbut-2-enyl diphosphate reductase from Picosynechococcus sp. (strain ATCC 27264 / PCC 7002 / PR-6) (Agmenellum quadruplicatum).